Consider the following 215-residue polypeptide: Ras-related protein Rab-5A (215 aa).

GTP contacts are provided by serine 29, alanine 30, glycine 32, lysine 33, serine 34, serine 35, histidine 46, glutamate 47, threonine 52, and glycine 78. Serine 34 is a binding site for Mg(2+). Short sequence motifs (switch) lie at residues 44–56 (QFHE…IGAA) and 77–93 (AGQE…YRGA). A Mg(2+)-binding site is contributed by threonine 52. Serine 84 is modified (phosphoserine). Asparagine 133, lysine 134, aspartate 136, alanine 164, and lysine 165 together coordinate GTP. Positions 181–215 (LPKNEPQNPGANSARGRGVDLTEPTQPTRSQCCSN) are disordered. The segment covering 203–215 (EPTQPTRSQCCSN) has biased composition (polar residues). S-geranylgeranyl cysteine attachment occurs at residues cysteine 212 and cysteine 213.

Belongs to the small GTPase superfamily. Rab family. In terms of assembly, interacts with GDI1; this promotes dissociation from membranes; phosphorylation at Ser-84 disrupts this interaction. Interacts with GDI2; phosphorylation at Ser-84 disrupts the interaction. Binds EEA1. Interacts with ALS2CL, SUN2, ZFYVE20 and RUFY1. Interacts with RIN1 and GAPVD1, which regulate its pathway, probably by acting as a GEF. Interacts with SGSM1 and SGSM3. Interacts with PIK3CB. Interacts with RABEP1 and RINL. Interacts with OCRL and INPP5F. May be a component of a complex composed of RAB5A, DYN2 and PIK3C3. Does not interact with the BLOC-3 complex (heterodimer of HPS1 and HPS4). Interacts with CLN5. Interacts with APPL2. Interacts with F8A1/F8A2/F8A3. Found in a complex with F8A1/F8A2/F8A3, HTT and RAB5A; mediates the recruitment of HTT by RAB5A onto early endosomes. Interacts with ATP9A. Interacts with PPP1R21; mediates the recruitment of FERRY complex by RAB5A onto early endosomes. Mg(2+) serves as cofactor. In terms of processing, phosphorylation of Ser-84 in the switch II region by LRRK2 prevents the association of RAB regulatory proteins, including RAB GDP dissociation inhibitors GDI1 and GDI2.

It is found in the cell membrane. Its subcellular location is the early endosome membrane. It localises to the melanosome. The protein localises to the cytoplasmic vesicle. The protein resides in the cell projection. It is found in the ruffle. Its subcellular location is the cytoplasm. It localises to the cytosol. The protein localises to the membrane. The protein resides in the phagosome membrane. It is found in the endosome membrane. The enzyme catalyses GTP + H2O = GDP + phosphate + H(+). Regulated by guanine nucleotide exchange factors (GEFs) including RINL, which promote the exchange of bound GDP for free GTP. Regulated by GTPase activating proteins (GAPs) which increase the GTP hydrolysis activity. Inhibited by GDP dissociation inhibitors (GDIs). Its function is as follows. The small GTPases Rab are key regulators of intracellular membrane trafficking, from the formation of transport vesicles to their fusion with membranes. Rabs cycle between an inactive GDP-bound form and an active GTP-bound form that is able to recruit to membranes different sets of downstream effectors directly responsible for vesicle formation, movement, tethering and fusion. RAB5A is required for the fusion of plasma membranes and early endosomes. Contributes to the regulation of filopodia extension. Required for the exosomal release of SDCBP, CD63, PDCD6IP and syndecan. Regulates maturation of apoptotic cell-containing phagosomes, probably downstream of DYN2 and PIK3C3. In Canis lupus familiaris (Dog), this protein is Ras-related protein Rab-5A (RAB5A).